Reading from the N-terminus, the 1054-residue chain is Reverse gyrase (1054 aa).

An RG N-terminal-type zinc finger spans residues 1-43; it reads MIPVVYSNLCPVCGGDLESKEIEKHVCFRKKRSLCLFPEDFLL. Zn(2+)-binding residues include cysteine 10, cysteine 13, cysteine 27, and cysteine 35. Cysteine 35 and cysteine 650 are oxidised to a cystine. ATP-binding residues include glutamine 61, lysine 84, threonine 85, and serine 86. Residues 65–245 form the Helicase ATP-binding domain; it reads AKRILRKESF…FRQLLNFDIG (181 aa). A DEAD box motif is present at residues 182–185; that stretch reads DDVD. The interval 352–427 is latch region; the sequence is PSFRVTIEDI…EGEVIFPDLR (76 aa). The topoisomerase I stretch occupies residues 502-1054; that stretch reads DLIKPALFIV…DLYAEIKSID (553 aa). Residues 506-662 form the Toprim domain; that stretch reads PALFIVESPT…VKRAEFHEVT (157 aa). Glutamate 512 provides a ligand contact to Mg(2+). The RG C-terminal-type zinc-finger motif lies at 581–609; the sequence is IKRCRDCGYQFTEDRESCPKCGSENVDNS. Cysteine 584, cysteine 587, cysteine 598, and cysteine 601 together coordinate Zn(2+). Aspartate 631 contributes to the Mg(2+) binding site. The Topo IA-type catalytic domain maps to 677–1054; sequence DENLVKAQVV…DLYAEIKSID (378 aa). Tyrosine 809 acts as the O-(5'-phospho-DNA)-tyrosine intermediate in catalysis.

The protein in the N-terminal section; belongs to the DEAD box helicase family. DDVD subfamily. This sequence in the C-terminal section; belongs to the type IA topoisomerase family. In terms of assembly, monomer. Requires Zn(2+) as cofactor. Mg(2+) serves as cofactor.

It localises to the cytoplasm. The catalysed reaction is ATP + H2O = ADP + phosphate + H(+). Functionally, modifies the topological state of DNA by introducing positive supercoils in an ATP-dependent process, increasing the linking number in steps of +1. Very efficient supercoiling occurs on relaxed DNA with a single-stranded bubble; the minimal bubble is 20 nucleotides (nt) and up to 10 positive supercoils can be introduced into a 3.1 kb plasmid with a 50 nt bubble. Positively supercoils DNA with all (d)NTPS, although it requires about 10-fold more of non-(d)ATP. In the absence of ATP (or at low levels of enzyme), or in the presence of ADP, relaxes negative supercoils. Only relaxes positive supercoils when the substrate contains a bubble. Also promotes strand annealing of complementary ssDNA circles. Binds to single-stranded DNA, transiently cleaves and then rejoins the ends, introducing a positive supercoil in the process. The scissile phosphodiester is attacked by the catalytic tyrosine of the enzyme, resulting in the formation of a DNA-(5'-phosphotyrosyl)-enzyme intermediate. Probably involved in rewinding DNA strands in regions of the chromosome that have opened up to allow replication, transcription, DNA repair and/or for DNA protection. In terms of biological role, in vitro protects DNA against degradation at 90 degrees Celsius, reducing dsDNA breakage about 8-fold; ATP hydrolysis is not necessary, while ADP decreases the protection somewhat. Coats all forms of dsDNA; the DNA is protected against cleavage and transcription. Recognizes nicked DNA and forms a coat at the nicking site, which may help hold DNA in a structure amenable to repair. The protein is Reverse gyrase of Archaeoglobus fulgidus (strain ATCC 49558 / DSM 4304 / JCM 9628 / NBRC 100126 / VC-16).